Reading from the N-terminus, the 111-residue chain is Colipase (111 aa).

Positions 1 to 16 are cleaved as a signal peptide; sequence MKVLVLLLVTLAVVYA. Positions 17 to 21 are cleaved as a propeptide — enterostatin, activation peptide; the sequence is APDPR. Disulfide bonds link cysteine 33-cysteine 44, cysteine 39-cysteine 55, cysteine 43-cysteine 77, cysteine 65-cysteine 85, and cysteine 79-cysteine 103.

It belongs to the colipase family. Forms a 1:1 stoichiometric complex with pancreatic lipase. Expressed by the pancreas.

The protein localises to the secreted. Colipase is a cofactor of pancreatic lipase. It allows the lipase to anchor itself to the lipid-water interface. Without colipase the enzyme is washed off by bile salts, which have an inhibitory effect on the lipase. Functionally, enterostatin has a biological activity as a satiety signal. This is Colipase (CLPS) from Ictidomys tridecemlineatus (Thirteen-lined ground squirrel).